Here is a 216-residue protein sequence, read N- to C-terminus: Ribosomal RNA small subunit methyltransferase G (216 aa).

S-adenosyl-L-methionine is bound by residues G83, M88, 134 to 135 (VE), and R149.

Belongs to the methyltransferase superfamily. RNA methyltransferase RsmG family.

It localises to the cytoplasm. It carries out the reaction guanosine(527) in 16S rRNA + S-adenosyl-L-methionine = N(7)-methylguanosine(527) in 16S rRNA + S-adenosyl-L-homocysteine. Its function is as follows. Specifically methylates the N7 position of guanine in position 527 of 16S rRNA. This Pseudomonas putida (strain GB-1) protein is Ribosomal RNA small subunit methyltransferase G.